A 158-amino-acid polypeptide reads, in one-letter code: Transcription elongation factor GreA (158 aa).

It belongs to the GreA/GreB family.

Necessary for efficient RNA polymerase transcription elongation past template-encoded arresting sites. The arresting sites in DNA have the property of trapping a certain fraction of elongating RNA polymerases that pass through, resulting in locked ternary complexes. Cleavage of the nascent transcript by cleavage factors such as GreA or GreB allows the resumption of elongation from the new 3'terminus. GreA releases sequences of 2 to 3 nucleotides. In Acinetobacter baumannii (strain SDF), this protein is Transcription elongation factor GreA.